The primary structure comprises 159 residues: S-ribosylhomocysteine lyase (159 aa).

Fe cation-binding residues include H53, H57, and C124.

It belongs to the LuxS family. In terms of assembly, homodimer. Fe cation is required as a cofactor.

It catalyses the reaction S-(5-deoxy-D-ribos-5-yl)-L-homocysteine = (S)-4,5-dihydroxypentane-2,3-dione + L-homocysteine. Involved in the synthesis of autoinducer 2 (AI-2) which is secreted by bacteria and is used to communicate both the cell density and the metabolic potential of the environment. The regulation of gene expression in response to changes in cell density is called quorum sensing. Catalyzes the transformation of S-ribosylhomocysteine (RHC) to homocysteine (HC) and 4,5-dihydroxy-2,3-pentadione (DPD). The protein is S-ribosylhomocysteine lyase of Porphyromonas gingivalis (strain ATCC 33277 / DSM 20709 / CIP 103683 / JCM 12257 / NCTC 11834 / 2561).